The sequence spans 1013 residues: Sodium/potassium-transporting ATPase subunit alpha-3 (1013 aa).

Residues 1–10 show a composition bias toward basic and acidic residues; that stretch reads MGDKKDDKSS. The disordered stretch occupies residues 1-24; that stretch reads MGDKKDDKSSPKKSKAKERRDLDD. Topologically, residues 1-77 are cytoplasmic; that stretch reads MGDKKDDKSS…NALTPPPTTP (77 aa). S37 and S56 each carry phosphoserine. Residues 72-74 form an interaction with phosphoinositide-3 kinase region; the sequence is PPP. Residues 78–98 form a helical membrane-spanning segment; that stretch reads EWVKFCRQLFGGFSILLWIGA. The Extracellular portion of the chain corresponds to 99–121; that stretch reads ILCFLAYGIQAGTEDDPSGDNLY. A helical transmembrane segment spans residues 122–142; sequence LGIVLAAVVIITGCFSYYQEA. Over 143–278 the chain is Cytoplasmic; sequence KSSKIMESFK…VGKTPIAIEI (136 aa). A phosphoserine mark is found at S218 and S265. The helical transmembrane segment at 279–298 threads the bilayer; sequence EHFIQLITGVAVFLGVSFFI. The Extracellular portion of the chain corresponds to 299–310; it reads LSLILGYTWLEA. A helical membrane pass occupies residues 311 to 328; that stretch reads VIFLIGIIVANVPEGLLA. Residues 329–762 are Cytoplasmic-facing; sequence TVTVCLTLTA…EEGRLIFDNL (434 aa). Residue D366 is the 4-aspartylphosphate intermediate of the active site. The residue at position 442 (S442) is a Phosphoserine. The residue at position 548 (Y548) is a Phosphotyrosine. The Mg(2+) site is built by D707 and D711. Residues 763 to 782 traverse the membrane as a helical segment; that stretch reads KKSIAYTLTSNIPEITPFLL. Topologically, residues 783 to 792 are extracellular; it reads FIMANIPLPL. The helical transmembrane segment at 793–813 threads the bilayer; the sequence is GTITILCIDLGTDMVPAISLA. Residues 814–833 are Cytoplasmic-facing; it reads YEAAESDIMKRQPRNPRTDK. A helical transmembrane segment spans residues 834 to 856; the sequence is LVNERLISMAYGQIGMIQALGGF. The Extracellular portion of the chain corresponds to 857 to 908; the sequence is FSYFVILAENGFLPGNLVGIRLNWDDRTVNDLEDSYGQQWTYEQRKVVEFTC. Residues 909 to 928 traverse the membrane as a helical segment; that stretch reads HTAFFVSIVVVQWADLIICK. The Cytoplasmic segment spans residues 929–941; that stretch reads TRRNSVFQQGMKN. S933 carries the phosphoserine; by PKA modification. A helical membrane pass occupies residues 942-960; it reads KILIFGLFEETALAAFLSY. Residues 961-975 are Extracellular-facing; sequence CPGMDVALRMYPLKP. The chain crosses the membrane as a helical span at residues 976–996; it reads SWWFCAFPYSFLIFVYDEIRK. Residues 997-1013 lie on the Cytoplasmic side of the membrane; the sequence is LILRRNPGGWVEKETYY.

It belongs to the cation transport ATPase (P-type) (TC 3.A.3) family. Type IIC subfamily. In terms of assembly, the sodium/potassium-transporting ATPase is composed of a catalytic alpha subunit, an auxiliary non-catalytic beta subunit and an additional regulatory subunit. Interacts with regulatory subunit FXYD1.

It is found in the cell membrane. It catalyses the reaction K(+)(out) + Na(+)(in) + ATP + H2O = K(+)(in) + Na(+)(out) + ADP + phosphate + H(+). This is the catalytic component of the active enzyme, which catalyzes the hydrolysis of ATP coupled with the exchange of sodium and potassium ions across the plasma membrane. This action creates the electrochemical gradient of sodium and potassium ions, providing the energy for active transport of various nutrients. In Mus musculus (Mouse), this protein is Sodium/potassium-transporting ATPase subunit alpha-3 (Atp1a3).